Reading from the N-terminus, the 2443-residue chain is Spatacsin (2443 aa).

The residue at position 1955 (serine 1955) is a Phosphoserine.

As to quaternary structure, interacts with AP5Z1, AP5B1, AP5S1 and ZFYVE26. Expressed in all structures of brain, with a high expression in cerebellum. Expressed in cortical projection neurons.

It localises to the cytoplasm. It is found in the cytosol. Its subcellular location is the nucleus. The protein localises to the cell projection. The protein resides in the axon. It localises to the dendrite. Its function is as follows. May play a role in neurite plasticity by maintaining cytoskeleton stability and regulating synaptic vesicle transport. The sequence is that of Spatacsin (SPG11) from Homo sapiens (Human).